A 466-amino-acid chain; its full sequence is Hydroxyacid-oxoacid transhydrogenase, mitochondrial (466 aa).

Lys444 carries the N6-acetyllysine modification. At Ser451 the chain carries Phosphoserine.

The protein belongs to the iron-containing alcohol dehydrogenase family. Hydroxyacid-oxoacid transhydrogenase subfamily.

Its subcellular location is the mitochondrion. The catalysed reaction is (S)-3-hydroxybutanoate + 2-oxoglutarate = (R)-2-hydroxyglutarate + acetoacetate. It catalyses the reaction 4-hydroxybutanoate + 2-oxoglutarate = (R)-2-hydroxyglutarate + succinate semialdehyde. Its function is as follows. Catalyzes the cofactor-independent reversible oxidation of gamma-hydroxybutyrate (GHB) to succinic semialdehyde (SSA) coupled to reduction of 2-ketoglutarate (2-KG) to D-2-hydroxyglutarate (D-2-HG). L-3-hydroxybutyrate (L-3-OHB) is also a substrate for HOT when using 2-KG as hydrogen acceptor, resulting in the formation of D-2-HG. The sequence is that of Hydroxyacid-oxoacid transhydrogenase, mitochondrial (ADHFE1) from Bos taurus (Bovine).